The following is a 511-amino-acid chain: MSAKEVDFERESHLHAVMCFLTGQSGEKIVSIYPHRKPATKAPSKDPQPSSSNPGQCVKPVLTSVKDPSYGFGRVDTEFDMSLGMLAYVFKTQEIACNDGFDMKINNQRFVAYPKTWKARGESTNYQISIVFALKNGCEQHTASAYQTLSNKIAVSLVMLQNYFGFLEREDKWADNAEEPNKDHPLEEFAKTSFIVQPLAEMFEEVRNRGNIHKYLINFVELGFCDEAHALTKLNVVPKGRQEIDEIVRKMKPYHGILLLEDVWPTPDANPIVAKLLSHCSPDRSILDMSTASGIPIFEVFMIIRHLLQWTRAILIYPLCNTNIYTSATSPQPLDKMAEKFTAQFGNTIHLAAGLAHFNPPKTLDTFIRKNLPLHEQGVRAKLVVALLRHQMLMQLHQFYYILKPYSIAILPEPKEPCPAEFTKIIEESTLPNDVKGVVADICAEMLETTSYASVKRTLSLFVKVAPMMDGNHHLEEIKYKNNLDRTEIEGVFVSFKLVIATFRRPDFVAE.

Residues 37–58 are disordered; the sequence is KPATKAPSKDPQPSSSNPGQCV.

Belongs to the NPR3 family. As to quaternary structure, probably part of the GATOR complex.

The protein resides in the lysosome membrane. Functionally, as a component of the GATOR complex may function in the amino acid-sensing branch of the TORC1 signaling pathway. The polypeptide is GATOR complex protein NPRL3 (nprl-3) (Caenorhabditis elegans).